The chain runs to 368 residues: GDSL esterase/lipase At4g16230 (368 aa).

An N-terminal signal peptide occupies residues 1–24 (MSLLVFLCQIIVLSVLFFSEVCLA). Catalysis depends on Ser-37, which acts as the Nucleophile. 2 N-linked (GlcNAc...) asparagine glycosylation sites follow: Asn-117 and Asn-286. Active-site residues include Asp-329 and His-332.

Belongs to the 'GDSL' lipolytic enzyme family.

Its subcellular location is the secreted. The sequence is that of GDSL esterase/lipase At4g16230 from Arabidopsis thaliana (Mouse-ear cress).